The following is a 154-amino-acid chain: Large ribosomal subunit protein uL13 (154 aa).

Belongs to the universal ribosomal protein uL13 family. In terms of assembly, part of the 50S ribosomal subunit.

This protein is one of the early assembly proteins of the 50S ribosomal subunit, although it is not seen to bind rRNA by itself. It is important during the early stages of 50S assembly. This chain is Large ribosomal subunit protein uL13, found in Borrelia garinii subsp. bavariensis (strain ATCC BAA-2496 / DSM 23469 / PBi) (Borreliella bavariensis).